The chain runs to 376 residues: DNA double-strand break repair protein Mre11 (376 aa).

Mn(2+)-binding residues include aspartate 5, histidine 7, aspartate 46, and aspartate 81. Histidine 82 serves as the catalytic Proton donor. The Mn(2+) site is built by histidine 159, histidine 189, and histidine 191.

This sequence belongs to the MRE11/RAD32 family. Homodimer. Forms a heterotetramer composed of two Mre11 subunits and two Rad50 subunits. Mn(2+) serves as cofactor.

Its activity is regulated as follows. Nuclease activity is regulated by Rad50. Functionally, part of the Rad50/Mre11 complex, which is involved in the early steps of DNA double-strand break (DSB) repair. The complex may facilitate opening of the processed DNA ends to aid in the recruitment of HerA and NurA. Mre11 binds to DSB ends and has both double-stranded 3'-5' exonuclease activity and single-stranded endonuclease activity. The polypeptide is DNA double-strand break repair protein Mre11 (Thermoplasma acidophilum (strain ATCC 25905 / DSM 1728 / JCM 9062 / NBRC 15155 / AMRC-C165)).